Here is a 108-residue protein sequence, read N- to C-terminus: UPF0060 membrane protein DSY4629 (108 aa).

Transmembrane regions (helical) follow at residues 5 to 25, 31 to 51, 60 to 80, and 86 to 106; these read IILF…VWLW, PFWY…IPTL, VYAA…WGID, and NYDW…LWAP.

Belongs to the UPF0060 family.

It localises to the cell membrane. This chain is UPF0060 membrane protein DSY4629, found in Desulfitobacterium hafniense (strain Y51).